The chain runs to 691 residues: Pentatricopeptide repeat-containing protein ATP4, chloroplastic (691 aa).

Residues 1 to 17 (MASLPLCRSPSSLLPSW) show a composition bias toward low complexity. The transit peptide at 1–35 (MASLPLCRSPSSLLPSWPHRPISASFNPKNPSSPV) directs the protein to the chloroplast. A disordered region spans residues 1 to 76 (MASLPLCRSP…SSNTRFLWVN (76 aa)). Over residues 24–33 (ASFNPKNPSS) the composition is skewed to polar residues. Residues 45–56 (PPQPQDPSPPSD) show a composition bias toward pro residues. Residues 61 to 76 (GTRPSSSSNTRFLWVN) show a composition bias toward polar residues. PPR repeat units lie at residues 163–197 (KVIL…GVQP), 198–232 (DNAT…GCSP), 233–267 (DMLT…KWQL), 268–302 (DPVI…GVRP), 303–337 (NLVV…QVQP), 338–372 (SRAT…AMGI), 373–403 (DVML…MKAS), 411–445 (DSWS…GFKP), 446–480 (NIFV…GIIP), and 546–580 (KMPY…GIYA). One can recognise a Smr domain in the interval 592 to 677 (LHLRGLSVGA…WFLTTNVAAK (86 aa)).

This sequence belongs to the PPR family. P subfamily.

The protein resides in the plastid. The protein localises to the chloroplast stroma. In terms of biological role, involved in translation and accumulation of chloroplast ATP synthase subunits. Interacts with the 5'-UTR of the chloroplast bicistronic atpB and atpE mRNA and activates its translation by facilitating ribosome association with the mRNA. Required for accumulation and activity of the chloroplast ATP synthase. Enhances atpA translation and is required for accumulation of specific processed atpF and psaJ transcripts. Required for the stabilization of bicistronic rpl16 and rpl14 mRNAs. The sequence is that of Pentatricopeptide repeat-containing protein ATP4, chloroplastic from Zea mays (Maize).